Consider the following 206-residue polypeptide: Large ribosomal subunit protein uL22m (206 aa).

The transit peptide at 1 to 40 (MAAAVLGQLGALWIHNLRSRGKLALGVLPQSYIHTSASLD) directs the protein to the mitochondrion.

The protein belongs to the universal ribosomal protein uL22 family. Component of the mitochondrial large ribosomal subunit (mt-LSU). Mature mammalian 55S mitochondrial ribosomes consist of a small (28S) and a large (39S) subunit. The 28S small subunit contains a 12S ribosomal RNA (12S mt-rRNA) and 30 different proteins. The 39S large subunit contains a 16S rRNA (16S mt-rRNA), a copy of mitochondrial valine transfer RNA (mt-tRNA(Val)), which plays an integral structural role, and 52 different proteins.

It is found in the mitochondrion. This is Large ribosomal subunit protein uL22m (MRPL22) from Homo sapiens (Human).